A 565-amino-acid chain; its full sequence is MSTKLILSFSLCLMVLSCSAQLLPWRKGQRSRPHRGHQQFHHQCDVQRLTASEPSRRVRSEAGVTEIWDNDTPEFRCAGFVAVRVVIQPGGLLLPSYSNAPYITFVEQGRGVQGVVVPGCPETFQSESEFEYPQSQRDQRSRQSESEESSRGDQRTRQSESEEFSRGDQRTRQSESEEFSRGDQRTRQSESEEFSRGDQRTRQSESEEFSRGDQHQKIFRIRDGDVIPSPAGVVQWTHNDGDNDLISITLYDANSFQNQLDGNVRNFFLAGQSKQSREDRRSQRQTREEGSDRQSRESDDDEALLEANILTGFQDEILQEIFRNVDQETISKLRGDNDQRGFIVQARDLKLRVPEEYEEELQRERGDRKRGGSGRSNGLEQAFCNLKFKQNVNRPSRADVFNPRAGRINTVNSNNLPILEFIQLSAQHVVLYKNAILGPRWNLNAHSALYVTRGEGRVQVVGDEGRSVFDDNVQRGQILVVPQGFAVVLKAGREGLEWVELKNDDNAITSPIAGKTSVLRAIPVEVLANSYDISTKEAFRLKNGRQEVEVFLPFQSRDEKERERF.

The first 20 residues, 1–20 (MSTKLILSFSLCLMVLSCSA), serve as a signal peptide directing secretion. 2 cysteine pairs are disulfide-bonded: C44-C77 and C120-C384. A Cupin type-1 1 domain is found at 49 to 331 (LTASEPSRRV…FRNVDQETIS (283 aa)). Disordered stretches follow at residues 126–224 (SESE…IRDG), 271–301 (GQSK…SDDD), and 356–376 (EYEE…SGRS). 3 stretches are compositionally biased toward basic and acidic residues: residues 137 to 224 (RDQR…IRDG), 275 to 297 (QSRE…QSRE), and 356 to 370 (EYEE…DRKR). The 150-residue stretch at 390–539 (QNVNRPSRAD…SYDISTKEAF (150 aa)) folds into the Cupin type-1 2 domain.

The protein belongs to the 11S seed storage protein (globulins) family. In terms of assembly, hexamer; each subunit is composed of an acidic and a basic chain derived from a single precursor and linked by a disulfide bond. As to expression, expressed only in immature seeds.

Seed storage protein. The sequence is that of 13S globulin seed storage protein 1 (FA02) from Fagopyrum esculentum (Common buckwheat).